Here is a 198-residue protein sequence, read N- to C-terminus: UPF0312 protein PFL_5802 (198 aa).

The signal sequence occupies residues 1-23 (MLKKTLAALAIGSAVLAAGQVMA).

Belongs to the UPF0312 family. Type 1 subfamily.

The protein localises to the periplasm. The sequence is that of UPF0312 protein PFL_5802 from Pseudomonas fluorescens (strain ATCC BAA-477 / NRRL B-23932 / Pf-5).